We begin with the raw amino-acid sequence, 302 residues long: MCLTRYDEKFFDCRKSQIIAYLDSQQVPVIPLFYNSYQSTAEIYRQIFIENKSKWKYSEPSFSDDDLLRKGIRPVRASFPDFSQASDCLKDLLARHKLVFVWGDEYCLPYRKEAFQAIHSTHSLVVTGYDGENKAYYVEDWDGLYGYLPAVHLEAAFDSLSRQMRTLLVLELNDEEMRENKQEDTDLFRKWLQAFEDDYIFYDRVLLDMRDYEENRLISMDHGLRLIAASRHVFSKFLHYIDDAPEEVGLLIRNHQLANHIAAIVRRYIIAKQIDWDGAACKIRQLREQEDDFMRKLKSRYG.

The enzyme catalyses 4-(gamma-L-glutamylamino)-(2S)-2-hydroxybutanoyl-[BtrI ACP] + ribostamycin = gamma-L-glutamyl-butirosin B + holo-[BtrI ACP] + H(+). It functions in the pathway antibiotic biosynthesis; butirosin biosynthesis. Aminoglycoside acyltransferase that attaches the (S)-4-amino-2-hydroxybutyrate (AHBA) side chain from the acyl carrier protein BtrI to the aminoglycoside ribostamycin in the biosynthetic pathway of butirosin. The AHBA side chain protects the antibiotic from several common resistance mechanisms. This is Ribostamycin:4-(gamma-L-glutamylamino)-(S)-2-hydroxybutanoyl-[BtrI acyl-carrier protein] 4-(gamma-L-glutamylamino)-(S)-2-hydroxybutanoate transferase (btrH) from Niallia circulans (Bacillus circulans).